The chain runs to 374 residues: Queuine tRNA-ribosyltransferase (374 aa).

Catalysis depends on D89, which acts as the Proton acceptor. Residues 89–93 (DSGGF), D143, Q187, and G214 each bind substrate. An RNA binding region spans residues 245 to 251 (GVGKPED). D264 acts as the Nucleophile in catalysis. The segment at 269–273 (TRNAR) is RNA binding; important for wobble base 34 recognition. Residues C302, C304, C307, and H333 each contribute to the Zn(2+) site.

Belongs to the queuine tRNA-ribosyltransferase family. As to quaternary structure, homodimer. Within each dimer, one monomer is responsible for RNA recognition and catalysis, while the other monomer binds to the replacement base PreQ1. The cofactor is Zn(2+).

It catalyses the reaction 7-aminomethyl-7-carbaguanine + guanosine(34) in tRNA = 7-aminomethyl-7-carbaguanosine(34) in tRNA + guanine. The protein operates within tRNA modification; tRNA-queuosine biosynthesis. Its function is as follows. Catalyzes the base-exchange of a guanine (G) residue with the queuine precursor 7-aminomethyl-7-deazaguanine (PreQ1) at position 34 (anticodon wobble position) in tRNAs with GU(N) anticodons (tRNA-Asp, -Asn, -His and -Tyr). Catalysis occurs through a double-displacement mechanism. The nucleophile active site attacks the C1' of nucleotide 34 to detach the guanine base from the RNA, forming a covalent enzyme-RNA intermediate. The proton acceptor active site deprotonates the incoming PreQ1, allowing a nucleophilic attack on the C1' of the ribose to form the product. After dissociation, two additional enzymatic reactions on the tRNA convert PreQ1 to queuine (Q), resulting in the hypermodified nucleoside queuosine (7-(((4,5-cis-dihydroxy-2-cyclopenten-1-yl)amino)methyl)-7-deazaguanosine). The protein is Queuine tRNA-ribosyltransferase of Shewanella sp. (strain W3-18-1).